Consider the following 103-residue polypeptide: Nucleoid-associated protein Anae109_3761 (103 aa).

It belongs to the YbaB/EbfC family. Homodimer.

The protein resides in the cytoplasm. It localises to the nucleoid. Functionally, binds to DNA and alters its conformation. May be involved in regulation of gene expression, nucleoid organization and DNA protection. The protein is Nucleoid-associated protein Anae109_3761 of Anaeromyxobacter sp. (strain Fw109-5).